The chain runs to 334 residues: MSAIRLGTRASTLATTQSEMVAGLLRSEGLDVNLTTITTHGDTSTASLAAMGGIGVFASAIRAALLEGEADIAVHSFKDLPTGRPLGLAIGAVPARADPRDALVARDGLTLHDLPQEASVGTGSPRRAAQLLAVRPDLTIVDIRGNVDTRLGRVKGLGRYAKNGGKEDLDAVVLAASGLARLGHSGAVTEFLDPSVVLPAPAQGALAVECRTADSRHGKLAKALARIDDRRTRLAATAERAVLSHLEAGCAAPIGALAQLKPVSGKSLQVLTLDVVVAAVDGSRTVREQVSVELPAEVEPALAAAHTLGVTAAEELLDDGAADVADLKASGSTR.

Cys250 is subject to S-(dipyrrolylmethanemethyl)cysteine.

Belongs to the HMBS family. Monomer. Dipyrromethane is required as a cofactor.

It carries out the reaction 4 porphobilinogen + H2O = hydroxymethylbilane + 4 NH4(+). It functions in the pathway porphyrin-containing compound metabolism; protoporphyrin-IX biosynthesis; coproporphyrinogen-III from 5-aminolevulinate: step 2/4. Functionally, tetrapolymerization of the monopyrrole PBG into the hydroxymethylbilane pre-uroporphyrinogen in several discrete steps. In Cutibacterium acnes (strain DSM 16379 / KPA171202) (Propionibacterium acnes), this protein is Porphobilinogen deaminase.